The chain runs to 536 residues: Cytochrome P450 monooxygenase macC (536 aa).

The helical transmembrane segment at 2-22 (ALLYITTAALALLLLFLRAVF) threads the bilayer. Heme is bound at residue Cys448.

The protein belongs to the cytochrome P450 family. The cofactor is heme.

The protein resides in the membrane. Its pathway is secondary metabolite biosynthesis; terpenoid biosynthesis. Its function is as follows. Cytochrome P450 monooxygenase; part of the gene cluster that mediates the biosynthesis of macrophorins, isoprenoid epoxycyclohexenones containing cyclized drimane moieties. The first step of the pathway is the synthesis of 6-methylsalicylic acid (6-MSA) by the polyketide synthase macA. 6-MSA is then converted to m-cresol by the decarboxylase macB. The cytochrome P450 monooxygenase macC then catalyzes the oxidation of m-cresol to toluquinol. Epoxidation of toluquinol is then performed by the short chain dehydrogenase macD, with the help of macE, and a further prenylation by macG leads to 7-deacetoxyyanuthone A. The next step is the hydroxylation of C-22 of 7-deacetoxyyanuthone A by the cytochrome P450 monooxygenase macH to yield 22-deacetylyanuthone A. O-Mevalon transferase macI then attaches mevalon to the hydroxyl group of 22-deacetylyanuthone A to produce yanuthone E. The terpene cyclase macJ catalyzes the cyclization of 22-deacetylyanuthone A to macrophorin A. MacJ is also able to catalyze cyclization of yanuthone E and 7-deacetoxyyanuthone A to their corresponding macrophorins. The macJ products can be further modified by macH and macJ, as well as by the FAD-dependent monooxygenase macF, to produce additional macrophorins, including 4'-oxomacrophorin A, 4'-oxomacrophorin D and 4'-oxomacrophorin E. The polypeptide is Cytochrome P450 monooxygenase macC (Penicillium terrestre).